We begin with the raw amino-acid sequence, 137 residues long: NADH dehydrogenase [ubiquinone] 1 beta subcomplex subunit 7 (137 aa).

The N-myristoyl glycine moiety is linked to residue Gly-2. The region spanning 56–98 is the CHCH domain; the sequence is RDYCAHYLIRLLKCKRDSFPNFLACKHEQHDWDYCEHLDYVKR. The Cx9C motif 1 motif lies at 59–69; that stretch reads CAHYLIRLLKC. 2 disulfides stabilise this stretch: Cys-59-Cys-90 and Cys-69-Cys-80. Residue Ser-73 is modified to Phosphoserine. A Cx9C motif 2 motif is present at residues 80–90; the sequence is CKHEQHDWDYC.

This sequence belongs to the complex I NDUFB7 subunit family. In terms of assembly, complex I is composed of 45 different subunits.

Its subcellular location is the mitochondrion inner membrane. It localises to the mitochondrion intermembrane space. Functionally, accessory subunit of the mitochondrial membrane respiratory chain NADH dehydrogenase (Complex I), that is believed not to be involved in catalysis. Complex I functions in the transfer of electrons from NADH to the respiratory chain. The immediate electron acceptor for the enzyme is believed to be ubiquinone. This is NADH dehydrogenase [ubiquinone] 1 beta subcomplex subunit 7 (Ndufb7) from Mus musculus (Mouse).